A 97-amino-acid polypeptide reads, in one-letter code: Citrate lyase acyl carrier protein (97 aa).

Position 14 is an O-(phosphoribosyl dephospho-coenzyme A)serine (Ser-14).

This sequence belongs to the CitD family. Oligomer with a subunit composition of (alpha,beta,gamma)6.

The protein resides in the cytoplasm. In terms of biological role, covalent carrier of the coenzyme of citrate lyase. This Cronobacter sakazakii (strain ATCC BAA-894) (Enterobacter sakazakii) protein is Citrate lyase acyl carrier protein.